A 1331-amino-acid polypeptide reads, in one-letter code: Xanthine dehydrogenase/oxidase (1331 aa).

Positions 4–91 (DELVFFVNGK…HVAVTTVEGI (88 aa)) constitute a 2Fe-2S ferredoxin-type domain. Cys-43, Cys-48, Cys-51, Cys-73, Cys-113, Cys-116, Cys-148, and Cys-150 together coordinate [2Fe-2S] cluster. The region spanning 229-412 (FEGERVTWIQ…LSIEIPYSRE (184 aa)) is the FAD-binding PCMH-type domain. FAD contacts are provided by residues 257–264 (LVVGNTEI), Phe-335, 345–349 (SIGGN), Asp-358, Leu-402, and Lys-420. Cys-534 and Cys-991 are joined by a disulfide. Positions 766 and 797 each coordinate Mo-molybdopterin. The substrate site is built by Glu-801 and Arg-879. Position 911 (Arg-911) interacts with Mo-molybdopterin. Substrate contacts are provided by Phe-913 and Thr-1009. Mo-molybdopterin is bound at residue Ala-1078. Residue Glu-1260 is the Proton acceptor of the active site.

Belongs to the xanthine dehydrogenase family. As to quaternary structure, homodimer. Interacts with BTN1A1. Requires FAD as cofactor. Mo-molybdopterin serves as cofactor. The cofactor is [2Fe-2S] cluster. Subject to partial proteolysis; this alters the enzyme from the dehydrogenase form (D) to the oxidase form (O). Post-translationally, contains sulfhydryl groups that are easily oxidized (in vitro); this alters the enzyme from the dehydrogenase form (D) to the oxidase form (O).

The protein resides in the cytoplasm. It localises to the peroxisome. The protein localises to the secreted. It catalyses the reaction xanthine + NAD(+) + H2O = urate + NADH + H(+). It carries out the reaction hypoxanthine + NAD(+) + H2O = xanthine + NADH + H(+). The enzyme catalyses xanthine + O2 + H2O = urate + H2O2. Its activity is regulated as follows. Can be converted from the dehydrogenase form (D) to the oxidase form (O) irreversibly by proteolysis or reversibly through the oxidation of sulfhydryl groups. Its function is as follows. Key enzyme in purine degradation. Catalyzes the oxidation of hypoxanthine to xanthine. Catalyzes the oxidation of xanthine to uric acid. Contributes to the generation of reactive oxygen species. This is Xanthine dehydrogenase/oxidase (XDH) from Felis catus (Cat).